An 82-amino-acid polypeptide reads, in one-letter code: Large ribosomal subunit protein uL23 (82 aa).

This sequence belongs to the universal ribosomal protein uL23 family. Part of the 50S ribosomal subunit. Contacts protein L29.

In terms of biological role, binds to 23S rRNA. One of the proteins that surrounds the polypeptide exit tunnel on the outside of the ribosome. This is Large ribosomal subunit protein uL23 from Methanococcoides burtonii (strain DSM 6242 / NBRC 107633 / OCM 468 / ACE-M).